Reading from the N-terminus, the 363-residue chain is Teichoic acids export ATP-binding protein TagH (363 aa).

The 220-residue stretch at 27–246 folds into the ABC transporter domain; it reads KHFFNIGNVD…YRKFSKDFKA (220 aa). 60–67 contributes to the ATP binding site; it reads GINGSGKS. Residues 247–363 form a unknown region; sequence QTAAYRKKYQ…KSQSVLFNSK (117 aa).

This sequence belongs to the ABC transporter superfamily. Teichoic acids exporter (TC 3.A.1.104.1) family. As to quaternary structure, the complex is composed of two ATP-binding proteins (TagH) and two transmembrane proteins (TagG).

It localises to the cell membrane. It carries out the reaction ATP + H2O + teichoic acidSide 1 = ADP + phosphate + teichoic acidSide 2.. Its function is as follows. Part of the ABC transporter complex TagGH involved in teichoic acids export. Responsible for energy coupling to the transport system. In Lactiplantibacillus plantarum (strain ATCC BAA-793 / NCIMB 8826 / WCFS1) (Lactobacillus plantarum), this protein is Teichoic acids export ATP-binding protein TagH.